We begin with the raw amino-acid sequence, 213 residues long: MAKNYYDITLALAGICQSARLVQQLAHQGHCDADALHVSLNSIIDMNPSSTLAVFGGSEANLRVGLETLLGVLNASSRQGLNAELTRYTLSLMVLKRKLSSAKGALDTLGNRINGLQRQLEHFDLQSETLMSAMAAIYVDVISPLGPRIQVTGSPAVLQSPQVQAKVRATLLAGIRAAVLWHQVGGGRLQLMFSRNRLTTQAKQILAHLTPEL.

Positions 99–126 (LSSAKGALDTLGNRINGLQRQLEHFDLQ) form a coiled coil.

This sequence belongs to the HflD family. As to quaternary structure, interacts with CII protein from phage lambda.

It is found in the cytoplasm. The protein localises to the cell inner membrane. In terms of biological role, negative regulator of phage lambda lysogenization. Contributes to the degradation of the phage regulatory protein CII. Acts probably by holding CII on the membrane surface, away from the target promoters, but close to the FtsH protease. The protein is High frequency lysogenization protein HflD of Escherichia coli O157:H7.